A 197-amino-acid polypeptide reads, in one-letter code: 3-isopropylmalate dehydratase small subunit (197 aa).

It belongs to the LeuD family. LeuD type 1 subfamily. In terms of assembly, heterodimer of LeuC and LeuD.

The catalysed reaction is (2R,3S)-3-isopropylmalate = (2S)-2-isopropylmalate. It participates in amino-acid biosynthesis; L-leucine biosynthesis; L-leucine from 3-methyl-2-oxobutanoate: step 2/4. In terms of biological role, catalyzes the isomerization between 2-isopropylmalate and 3-isopropylmalate, via the formation of 2-isopropylmaleate. This is 3-isopropylmalate dehydratase small subunit from Streptomyces avermitilis (strain ATCC 31267 / DSM 46492 / JCM 5070 / NBRC 14893 / NCIMB 12804 / NRRL 8165 / MA-4680).